The following is a 473-amino-acid chain: Trehalose-6-phosphate synthase (473 aa).

A D-glucose 6-phosphate-binding site is contributed by Arg-10. 21–22 (GG) contributes to the UDP-alpha-D-glucose binding site. 2 residues coordinate D-glucose 6-phosphate: Tyr-76 and Asp-130. Residues Arg-262 and Lys-267 each contribute to the UDP-alpha-D-glucose site. Arg-300 provides a ligand contact to D-glucose 6-phosphate. Residues Phe-339 and 365-369 (LVAKE) contribute to the UDP-alpha-D-glucose site. The segment at 454–473 (TPRSPERQQQNNVATFPKLA) is disordered.

The protein belongs to the glycosyltransferase 20 family. In terms of assembly, homotetramer.

It catalyses the reaction D-glucose 6-phosphate + UDP-alpha-D-glucose = alpha,alpha-trehalose 6-phosphate + UDP + H(+). Its pathway is glycan biosynthesis; trehalose biosynthesis. In terms of biological role, probably involved in the osmoprotection via the biosynthesis of trehalose. Catalyzes the transfer of glucose from UDP-alpha-D-glucose (UDP-Glc) to D-glucose 6-phosphate (Glc-6-P) to form trehalose-6-phosphate. Acts with retention of the anomeric configuration of the UDP-sugar donor. The sequence is that of Trehalose-6-phosphate synthase from Salmonella choleraesuis (strain SC-B67).